The chain runs to 171 residues: NADH-ubiquinone oxidoreductase chain 6 (171 aa).

5 helical membrane-spanning segments follow: residues 1–21 (MYVMFLLSILLVLGFVSISSK), 25–44 (IYGGVGLIVSGAVGCGIIMG), 49–71 (FMGLMVFLIYLGGMLVVFGYTTA), 85–105 (VVIWGVVLLGVGMELFMVAWM), and 150–170 (WFAAIAGWSLFISVLIVIEII).

The protein belongs to the complex I subunit 6 family. In terms of assembly, core subunit of respiratory chain NADH dehydrogenase (Complex I) which is composed of 45 different subunits.

It localises to the mitochondrion inner membrane. It catalyses the reaction a ubiquinone + NADH + 5 H(+)(in) = a ubiquinol + NAD(+) + 4 H(+)(out). Functionally, core subunit of the mitochondrial membrane respiratory chain NADH dehydrogenase (Complex I) which catalyzes electron transfer from NADH through the respiratory chain, using ubiquinone as an electron acceptor. Essential for the catalytic activity and assembly of complex I. This Lemur catta (Ring-tailed lemur) protein is NADH-ubiquinone oxidoreductase chain 6 (MT-ND6).